Here is a 447-residue protein sequence, read N- to C-terminus: Na(+)-translocating NADH-quinone reductase subunit A (447 aa).

The protein belongs to the NqrA family. Composed of six subunits; NqrA, NqrB, NqrC, NqrD, NqrE and NqrF.

It catalyses the reaction a ubiquinone + n Na(+)(in) + NADH + H(+) = a ubiquinol + n Na(+)(out) + NAD(+). In terms of biological role, NQR complex catalyzes the reduction of ubiquinone-1 to ubiquinol by two successive reactions, coupled with the transport of Na(+) ions from the cytoplasm to the periplasm. NqrA to NqrE are probably involved in the second step, the conversion of ubisemiquinone to ubiquinol. The protein is Na(+)-translocating NADH-quinone reductase subunit A of Neisseria gonorrhoeae (strain NCCP11945).